Reading from the N-terminus, the 369-residue chain is Ribosome-interacting GTPase 1 (369 aa).

Ser2 carries the N-acetylserine modification. Residues 66–292 form the OBG-type G domain; sequence ASVGFVGFPS…LLQVMWDRLN (227 aa). GTP is bound by residues 72-79, 118-122, and 250-253; these read GFPSVGKS, DLPGI, and NKID. One can recognise a TGS domain in the interval 292–368; it reads NLVRIYTKPK…EDEDVVTILK (77 aa).

This sequence belongs to the TRAFAC class OBG-HflX-like GTPase superfamily. OBG GTPase family. As to quaternary structure, associates with translating polyribosomes. Interacts with GIR2, TMA46, YAP1 and YGR250C.

The protein localises to the cytoplasm. Functionally, involved in ribosomal function. The chain is Ribosome-interacting GTPase 1 (RBG1) from Saccharomyces cerevisiae (strain ATCC 204508 / S288c) (Baker's yeast).